We begin with the raw amino-acid sequence, 333 residues long: Ketol-acid reductoisomerase (NADP(+)) (333 aa).

A KARI N-terminal Rossmann domain is found at 2 to 182 (AKIYYDEDAS…GATRAGVIET (181 aa)). Residues 25–28 (YGSQ), Ser-51, Ser-53, and 83–86 (DTVQ) contribute to the NADP(+) site. His-108 is a catalytic residue. Gly-134 is an NADP(+) binding site. The KARI C-terminal knotted domain maps to 183 to 327 (TFKEETETDL…EELRKMMPWL (145 aa)). 4 residues coordinate Mg(2+): Asp-191, Glu-195, Glu-227, and Glu-231. Ser-252 lines the substrate pocket.

It belongs to the ketol-acid reductoisomerase family. Mg(2+) serves as cofactor.

It carries out the reaction (2R)-2,3-dihydroxy-3-methylbutanoate + NADP(+) = (2S)-2-acetolactate + NADPH + H(+). The catalysed reaction is (2R,3R)-2,3-dihydroxy-3-methylpentanoate + NADP(+) = (S)-2-ethyl-2-hydroxy-3-oxobutanoate + NADPH + H(+). It functions in the pathway amino-acid biosynthesis; L-isoleucine biosynthesis; L-isoleucine from 2-oxobutanoate: step 2/4. The protein operates within amino-acid biosynthesis; L-valine biosynthesis; L-valine from pyruvate: step 2/4. In terms of biological role, involved in the biosynthesis of branched-chain amino acids (BCAA). Catalyzes an alkyl-migration followed by a ketol-acid reduction of (S)-2-acetolactate (S2AL) to yield (R)-2,3-dihydroxy-isovalerate. In the isomerase reaction, S2AL is rearranged via a Mg-dependent methyl migration to produce 3-hydroxy-3-methyl-2-ketobutyrate (HMKB). In the reductase reaction, this 2-ketoacid undergoes a metal-dependent reduction by NADPH to yield (R)-2,3-dihydroxy-isovalerate. This Aquifex aeolicus (strain VF5) protein is Ketol-acid reductoisomerase (NADP(+)).